The sequence spans 272 residues: PHD finger protein ALFIN-LIKE 6 (272 aa).

A compositionally biased stretch (gly residues) spans 1 to 23 (MEGGGGGGGGGGGGGGGGGGGGA). 2 disordered regions span residues 1–24 (MEGGGGGGGGGGGGGGGGGGGGAP) and 162–218 (QAKE…DNTL). Over residues 168–182 (PNSSSKSNKPSSKVQ) the composition is skewed to low complexity. The span at 183-200 (SKAESRSKSKLSAPKDEE) shows a compositional bias: basic and acidic residues. Positions 201 to 214 (GSGDDEGEEEEDDH) are enriched in acidic residues. The PHD-type zinc-finger motif lies at 216-268 (NTLCGTCGTNDGKDEFWICCDNCEKWYHGKCVKITPARAEHIKQYKCPDCTNK).

It belongs to the Alfin family.

The protein resides in the nucleus. Its function is as follows. Histone-binding component that specifically recognizes H3 tails trimethylated on 'Lys-4' (H3K4me3), which mark transcription start sites of virtually all active genes. The protein is PHD finger protein ALFIN-LIKE 6 of Oryza sativa subsp. indica (Rice).